The primary structure comprises 473 residues: Cysteine--tRNA ligase (473 aa).

Cys-28 contributes to the Zn(2+) binding site. The short motif at 30–40 is the 'HIGH' region element; that stretch reads PTVYNMPHIGN. Zn(2+) is bound by residues Cys-213, His-238, and Glu-242. The 'KMSKS' region motif lies at 270 to 274; it reads KMSKS. Lys-273 provides a ligand contact to ATP.

This sequence belongs to the class-I aminoacyl-tRNA synthetase family. Requires Zn(2+) as cofactor.

The protein localises to the cytoplasm. The enzyme catalyses tRNA(Cys) + L-cysteine + ATP = L-cysteinyl-tRNA(Cys) + AMP + diphosphate. The polypeptide is Cysteine--tRNA ligase (Methanosarcina mazei (strain ATCC BAA-159 / DSM 3647 / Goe1 / Go1 / JCM 11833 / OCM 88) (Methanosarcina frisia)).